Consider the following 306-residue polypeptide: Curved DNA-binding protein (306 aa).

The J domain maps to Asp-5–Trp-69.

Its subcellular location is the cytoplasm. The protein localises to the nucleoid. Its function is as follows. DNA-binding protein that preferentially recognizes a curved DNA sequence. It is probably a functional analog of DnaJ; displays overlapping activities with DnaJ, but functions under different conditions, probably acting as a molecular chaperone in an adaptive response to environmental stresses other than heat shock. Lacks autonomous chaperone activity; binds native substrates and targets them for recognition by DnaK. Its activity is inhibited by the binding of CbpM. In Salmonella arizonae (strain ATCC BAA-731 / CDC346-86 / RSK2980), this protein is Curved DNA-binding protein.